A 77-amino-acid chain; its full sequence is Acyl carrier protein (77 aa).

Residues 2-77 (SNIEERVRNI…SAIDYVVNNG (76 aa)) form the Carrier domain. Position 37 is an O-(pantetheine 4'-phosphoryl)serine (serine 37).

Belongs to the acyl carrier protein (ACP) family. Post-translationally, 4'-phosphopantetheine is transferred from CoA to a specific serine of apo-ACP by AcpS. This modification is essential for activity because fatty acids are bound in thioester linkage to the sulfhydryl of the prosthetic group.

It localises to the cytoplasm. It functions in the pathway lipid metabolism; fatty acid biosynthesis. In terms of biological role, carrier of the growing fatty acid chain in fatty acid biosynthesis. This is Acyl carrier protein from Psychromonas ingrahamii (strain DSM 17664 / CCUG 51855 / 37).